A 392-amino-acid chain; its full sequence is MNLRPLAPLLLTLLAGCSQQPPLRGSGDLGVLIERADGSVQILDGTAKTSLARVEGLGDLSHASLVFSRDQRYAYVFGRDGGLTKLDLLAQRIDKRLIQGGNSIGGAISQDGRLVAVSNYEPGGVKVFDSRTLELVAEIPATRLPGQDRNSRVVGLVDAPGQRFVFSLFDSGEIWIADFSQGDTPHLTRFRDIGKQPYDALISPDGRYYMAGLFGEDGMAQLDLWHPERGVRRVLGDYGRGQRKLPVYKMPHLEGWTIASDQAFVPAVGHHQVLVLDARDWKQTDAIDVAGQPVFVMTRPDDRQIWVNFAYPDNDKVQVIDSETHEVIETLRPGPGVLHMEFSGRGDQVWISVRDADQLQVWDPYRLKRIGSLPARSPSGIFFSHRAQHIGL.

It is found in the cytoplasm. Required for the biosynthesis of heme d1 of nitrite reductase. Could have a dehydrogenase activity yielding sirohydrochlorin from precorrin-2 or dehydrogenation of propionate side chain C17. This is Protein NirF (nirF) from Pseudomonas aeruginosa (strain ATCC 15692 / DSM 22644 / CIP 104116 / JCM 14847 / LMG 12228 / 1C / PRS 101 / PAO1).